We begin with the raw amino-acid sequence, 342 residues long: Platelet-activating factor receptor (342 aa).

The Extracellular portion of the chain corresponds to 1–16 (MEPNNSFRVDSEFRYT). N-linked (GlcNAc...) asparagine glycosylation occurs at Asn4. The helical transmembrane segment at 17 to 38 (LFPIFYSIVFVLGVIANSYVLW) threads the bilayer. Residues 39-54 (VFARLYPSKKFNEIKI) lie on the Cytoplasmic side of the membrane. A helical membrane pass occupies residues 55–74 (FMVNLTMADLLFLVTLPLWI). Residues 75–91 (VYYYNQGDWILPKFLCN) are Extracellular-facing. Cys90 and Cys173 are oxidised to a cystine. A helical membrane pass occupies residues 92–113 (LAGCFFFINTYCSVAFLAVITY). Residues 114-133 (NRFQAVTRPIKTAQATTRKR) lie on the Cytoplasmic side of the membrane. A helical membrane pass occupies residues 134–155 (GFLLSLIIWVSIVGAASYFFVL). At 156–184 (DSTNSEPKKTGSGNITRCFEHYEKGSIPV) the chain is on the extracellular side. Asn169 is a glycosylation site (N-linked (GlcNAc...) asparagine). Residues 185–205 (LIIHIFLVFSFFLVFLIILFC) form a helical membrane-spanning segment. Residues 206-233 (NLVIIRTLLTQQVQMQRNAEVKRRALWM) are Cytoplasmic-facing. Residues 234 to 254 (VCTVLAVFVICFVPHHLVQLP) traverse the membrane as a helical segment. Topologically, residues 255–276 (WTLAELGFQDTDFHQGINDAHQ) are extracellular. Residues 277–296 (VTLCLLSTNCVLDPIIYCFL) form a helical membrane-spanning segment. Over 297–342 (TKKFRKHLTEKLYSMRESRKCSRATSETGTEVVVQLKDAPIKSLKY) the chain is Cytoplasmic.

It belongs to the G-protein coupled receptor 1 family. As to quaternary structure, interacts with ARRB1.

It is found in the cell membrane. In terms of biological role, receptor for platelet activating factor, a chemotactic phospholipid mediator that possesses potent inflammatory, smooth-muscle contractile and hypotensive activity. Seems to mediate its action via a G protein that activates a phosphatidylinositol-calcium second messenger system. The polypeptide is Platelet-activating factor receptor (Capra hircus (Goat)).